The following is a 147-amino-acid chain: Nucleoside diphosphate kinase (147 aa).

Positions 9, 57, 85, 91, 102, and 112 each coordinate ATP. The active-site Pros-phosphohistidine intermediate is the histidine 115.

It belongs to the NDK family. In terms of assembly, homotetramer. Mg(2+) serves as cofactor.

The protein localises to the cytoplasm. It catalyses the reaction a 2'-deoxyribonucleoside 5'-diphosphate + ATP = a 2'-deoxyribonucleoside 5'-triphosphate + ADP. The catalysed reaction is a ribonucleoside 5'-diphosphate + ATP = a ribonucleoside 5'-triphosphate + ADP. In terms of biological role, major role in the synthesis of nucleoside triphosphates other than ATP. The ATP gamma phosphate is transferred to the NDP beta phosphate via a ping-pong mechanism, using a phosphorylated active-site intermediate. The sequence is that of Nucleoside diphosphate kinase from Listeria monocytogenes serotype 4a (strain HCC23).